We begin with the raw amino-acid sequence, 188 residues long: Elongation factor P (188 aa).

The protein belongs to the elongation factor P family.

It is found in the cytoplasm. It functions in the pathway protein biosynthesis; polypeptide chain elongation. Involved in peptide bond synthesis. Stimulates efficient translation and peptide-bond synthesis on native or reconstituted 70S ribosomes in vitro. Probably functions indirectly by altering the affinity of the ribosome for aminoacyl-tRNA, thus increasing their reactivity as acceptors for peptidyl transferase. This Gluconacetobacter diazotrophicus (strain ATCC 49037 / DSM 5601 / CCUG 37298 / CIP 103539 / LMG 7603 / PAl5) protein is Elongation factor P.